The chain runs to 300 residues: Glutamyl-Q tRNA(Asp) synthetase (300 aa).

L-glutamate-binding positions include 8-12 and aspartate 44; that span reads RFAPT. The 'HIGH' region signature appears at 11–21; that stretch reads PTPSGDLHLGS. 4 residues coordinate Zn(2+): cysteine 100, cysteine 102, tyrosine 122, and cysteine 126. Residues tyrosine 181 and arginine 199 each coordinate L-glutamate. A 'KMSKS' region motif is present at residues 237 to 241; that stretch reads KLSKQ. Lysine 240 contributes to the ATP binding site.

Belongs to the class-I aminoacyl-tRNA synthetase family. GluQ subfamily. The cofactor is Zn(2+).

Catalyzes the tRNA-independent activation of glutamate in presence of ATP and the subsequent transfer of glutamate onto a tRNA(Asp). Glutamate is transferred on the 2-amino-5-(4,5-dihydroxy-2-cyclopenten-1-yl) moiety of the queuosine in the wobble position of the QUC anticodon. This chain is Glutamyl-Q tRNA(Asp) synthetase, found in Synechococcus sp. (strain ATCC 27144 / PCC 6301 / SAUG 1402/1) (Anacystis nidulans).